A 467-amino-acid chain; its full sequence is tRNA modification GTPase MnmE (467 aa).

(6S)-5-formyl-5,6,7,8-tetrahydrofolate-binding residues include arginine 27, glutamate 89, and arginine 128. Positions 225–387 (GISMVIAGRP…LKQAIFTVVT (163 aa)) constitute a TrmE-type G domain. Residue asparagine 235 participates in K(+) binding. GTP contacts are provided by residues 235–240 (NVGKSS), 254–260 (TSIAGTT), 279–282 (DTAG), and 368–370 (SAR). Mg(2+) is bound at residue serine 239. Positions 254, 256, and 259 each coordinate K(+). Mg(2+) is bound at residue threonine 260. Lysine 467 provides a ligand contact to (6S)-5-formyl-5,6,7,8-tetrahydrofolate.

It belongs to the TRAFAC class TrmE-Era-EngA-EngB-Septin-like GTPase superfamily. TrmE GTPase family. Homodimer. Heterotetramer of two MnmE and two MnmG subunits. The cofactor is K(+).

The protein resides in the cytoplasm. In terms of biological role, exhibits a very high intrinsic GTPase hydrolysis rate. Involved in the addition of a carboxymethylaminomethyl (cmnm) group at the wobble position (U34) of certain tRNAs, forming tRNA-cmnm(5)s(2)U34. This is tRNA modification GTPase MnmE from Desulfotalea psychrophila (strain LSv54 / DSM 12343).